Reading from the N-terminus, the 362-residue chain is 3-dehydroquinate synthase (362 aa).

Residues Asp-73–Lys-78, Gly-107–Asp-111, Thr-131–Thr-132, Lys-144, Lys-153, and Thr-171–Thr-174 contribute to the NAD(+) site. The Zn(2+) site is built by Glu-186, His-249, and His-265.

It belongs to the sugar phosphate cyclases superfamily. Dehydroquinate synthase family. NAD(+) serves as cofactor. Requires Co(2+) as cofactor. It depends on Zn(2+) as a cofactor.

It is found in the cytoplasm. It carries out the reaction 7-phospho-2-dehydro-3-deoxy-D-arabino-heptonate = 3-dehydroquinate + phosphate. The protein operates within metabolic intermediate biosynthesis; chorismate biosynthesis; chorismate from D-erythrose 4-phosphate and phosphoenolpyruvate: step 2/7. Catalyzes the conversion of 3-deoxy-D-arabino-heptulosonate 7-phosphate (DAHP) to dehydroquinate (DHQ). This Mycobacterium bovis (strain ATCC BAA-935 / AF2122/97) protein is 3-dehydroquinate synthase.